Here is a 125-residue protein sequence, read N- to C-terminus: Prefoldin subunit beta (125 aa).

This sequence belongs to the prefoldin subunit beta family. As to quaternary structure, heterohexamer of two alpha and four beta subunits.

It is found in the cytoplasm. Functionally, molecular chaperone capable of stabilizing a range of proteins. Seems to fulfill an ATP-independent, HSP70-like function in archaeal de novo protein folding. In Pyrobaculum islandicum (strain DSM 4184 / JCM 9189 / GEO3), this protein is Prefoldin subunit beta.